A 458-amino-acid polypeptide reads, in one-letter code: Argininosuccinate lyase (458 aa).

The protein belongs to the lyase 1 family. Argininosuccinate lyase subfamily.

Its subcellular location is the cytoplasm. It catalyses the reaction 2-(N(omega)-L-arginino)succinate = fumarate + L-arginine. It participates in amino-acid biosynthesis; L-arginine biosynthesis; L-arginine from L-ornithine and carbamoyl phosphate: step 3/3. This chain is Argininosuccinate lyase, found in Neisseria meningitidis serogroup A / serotype 4A (strain DSM 15465 / Z2491).